Here is a 633-residue protein sequence, read N- to C-terminus: Sodium- and chloride-dependent glycine transporter 1 (633 aa).

Over 1–30 (MGLCVNGAVPSEATKKDENLKRGNWGNQIE) the chain is Cytoplasmic. Helical transmembrane passes span 31–51 (FVLT…FPYL), 58–78 (GAFM…LFFM), and 113–133 (YIGI…FASM). The Extracellular portion of the chain corresponds to 134-208 (NRVLPWTYCN…ISEDIGDFGE (75 aa)). N-linked (GlcNAc...) asparagine glycans are attached at residues N158, N164, N173, and N179. 9 consecutive transmembrane segments (helical) span residues 209 to 229 (VQLP…LCLI), 238 to 258 (VVYF…IRGI), 283 to 303 (VWGD…GGLI), 330 to 350 (SVYA…HLGV), 373 to 393 (LLPI…LLGL), 429 to 449 (IIGF…WLLL), 453 to 473 (YAAS…VMYI), 493 to 513 (LFFQ…ILIF), and 533 to 553 (ITIG…YAIF). The Cytoplasmic portion of the chain corresponds to 554–633 (KIWCSEGDTF…GQAHTQDSKV (80 aa)). A disordered region spans residues 588–633 (RYAQMSSTRSESNPEAQPLNPEKMKEDLSLTIQGSNGQAHTQDSKV). Polar residues-rich tracts occupy residues 591-602 (QMSSTRSESNPE) and 617-633 (LTIQ…DSKV).

It belongs to the sodium:neurotransmitter symporter (SNF) (TC 2.A.22) family. SLC6A9 subfamily. First expressed in early tailbud stage embryos in the midbrain and anterior spinal cord, and weakly in the hindbrain. By late tailbud stages, expression extends posteriorly in the spinal cord to appear in between somites. Expressed in the forebrain, retina, between the somites and in the blood islands by the swimming tadpole stages.

It localises to the cell membrane. The catalysed reaction is glycine(out) + chloride(out) + 2 Na(+)(out) = glycine(in) + chloride(in) + 2 Na(+)(in). Functionally, sodium- and chloride-dependent glycine transporter which is essential for regulating glycine concentrations at inhibitory glycinergic synapses. The polypeptide is Sodium- and chloride-dependent glycine transporter 1 (Xenopus laevis (African clawed frog)).